The sequence spans 208 residues: MGISRDNWHKRRRTGGKRKPVHKKRKYELGRPAANTKIGPRRIHTIRVRGGNKKYRALRLDVGNFSWGSECCTRKTRIIDVVYNASNNELVRTKTLVKNCVVLVDSTPYRQWYESHYALPLGRKKGAKLTPEEEEILNKKRSKKVQKKFTLRRKTAKISPLLEEQFLQGKLLACISSRPGQCGRADGYVLEGKELEFYLRKIKAKKGK.

The tract at residues 1-27 is disordered; it reads MGISRDNWHKRRRTGGKRKPVHKKRKY. The span at 8 to 26 shows a compositional bias: basic residues; sequence WHKRRRTGGKRKPVHKKRK.

The protein belongs to the eukaryotic ribosomal protein eS8 family. In terms of assembly, component of the small ribosomal subunit. Identified in a IGF2BP1-dependent mRNP granule complex containing untranslated mRNAs. Part of the small subunit (SSU) processome, composed of more than 70 proteins and the RNA chaperone small nucleolar RNA (snoRNA) U3.

The protein resides in the cytoplasm. The protein localises to the membrane. It is found in the nucleus. It localises to the nucleolus. In terms of biological role, component of the small ribosomal subunit. The ribosome is a large ribonucleoprotein complex responsible for the synthesis of proteins in the cell. Part of the small subunit (SSU) processome, first precursor of the small eukaryotic ribosomal subunit. During the assembly of the SSU processome in the nucleolus, many ribosome biogenesis factors, an RNA chaperone and ribosomal proteins associate with the nascent pre-rRNA and work in concert to generate RNA folding, modifications, rearrangements and cleavage as well as targeted degradation of pre-ribosomal RNA by the RNA exosome. This Danio rerio (Zebrafish) protein is Small ribosomal subunit protein eS8 (rps8).